Reading from the N-terminus, the 431-residue chain is Enolase (431 aa).

Glutamine 168 contacts (2R)-2-phosphoglycerate. The Proton donor role is filled by glutamate 210. Aspartate 247, glutamate 291, and aspartate 318 together coordinate Mg(2+). Residues lysine 343, arginine 372, serine 373, and lysine 394 each contribute to the (2R)-2-phosphoglycerate site. Lysine 343 acts as the Proton acceptor in catalysis.

The protein belongs to the enolase family. As to quaternary structure, component of the RNA degradosome, a multiprotein complex involved in RNA processing and mRNA degradation. Requires Mg(2+) as cofactor.

It localises to the cytoplasm. Its subcellular location is the secreted. It is found in the cell surface. The catalysed reaction is (2R)-2-phosphoglycerate = phosphoenolpyruvate + H2O. Its pathway is carbohydrate degradation; glycolysis; pyruvate from D-glyceraldehyde 3-phosphate: step 4/5. Its function is as follows. Catalyzes the reversible conversion of 2-phosphoglycerate (2-PG) into phosphoenolpyruvate (PEP). It is essential for the degradation of carbohydrates via glycolysis. The protein is Enolase of Acinetobacter baumannii (strain AYE).